The chain runs to 708 residues: Ion-translocating oxidoreductase complex subunit C (708 aa).

4Fe-4S ferredoxin-type domains follow at residues 369-397 (GEPQEEQSCIRCSACADACPADLLPQQLY) and 407-436 (KATTHNIADCIECGACAWVCPSNIPLVQYF). Positions 377, 380, 383, 387, 416, 419, 422, and 426 each coordinate [4Fe-4S] cluster. The tract at residues 663–684 (KARKLEQQQTNAEPEEQVDPRK) is disordered.

It belongs to the 4Fe4S bacterial-type ferredoxin family. RnfC subfamily. The complex is composed of six subunits: RsxA, RsxB, RsxC, RsxD, RsxE and RsxG. It depends on [4Fe-4S] cluster as a cofactor.

It localises to the cell inner membrane. Part of a membrane-bound complex that couples electron transfer with translocation of ions across the membrane. Required to maintain the reduced state of SoxR. This chain is Ion-translocating oxidoreductase complex subunit C, found in Shigella boydii serotype 18 (strain CDC 3083-94 / BS512).